Reading from the N-terminus, the 441-residue chain is Probable tRNA pseudouridine synthase D (441 aa).

The Nucleophile role is filled by D89. The 226-residue stretch at 168–393 (GVPNFFGVQR…SKGTRREVLL (226 aa)) folds into the TRUD domain.

It belongs to the pseudouridine synthase TruD family.

It carries out the reaction uridine(13) in tRNA = pseudouridine(13) in tRNA. Could be responsible for synthesis of pseudouridine from uracil-13 in transfer RNAs. This is Probable tRNA pseudouridine synthase D from Methanosarcina acetivorans (strain ATCC 35395 / DSM 2834 / JCM 12185 / C2A).